A 475-amino-acid polypeptide reads, in one-letter code: UDP-N-acetylmuramoylalanine--D-glutamate ligase (475 aa).

130-136 is a binding site for ATP; that stretch reads GTNGKTT.

This sequence belongs to the MurCDEF family.

It localises to the cytoplasm. The enzyme catalyses UDP-N-acetyl-alpha-D-muramoyl-L-alanine + D-glutamate + ATP = UDP-N-acetyl-alpha-D-muramoyl-L-alanyl-D-glutamate + ADP + phosphate + H(+). It functions in the pathway cell wall biogenesis; peptidoglycan biosynthesis. Its function is as follows. Cell wall formation. Catalyzes the addition of glutamate to the nucleotide precursor UDP-N-acetylmuramoyl-L-alanine (UMA). This chain is UDP-N-acetylmuramoylalanine--D-glutamate ligase, found in Corynebacterium diphtheriae (strain ATCC 700971 / NCTC 13129 / Biotype gravis).